The chain runs to 230 residues: tRNA (guanine-N(7)-)-methyltransferase (230 aa).

Positions 61, 86, 113, and 136 each coordinate S-adenosyl-L-methionine. Residue aspartate 136 is part of the active site. Residues lysine 140, aspartate 172, and 208-211 (TKYE) contribute to the substrate site.

It belongs to the class I-like SAM-binding methyltransferase superfamily. TrmB family.

The catalysed reaction is guanosine(46) in tRNA + S-adenosyl-L-methionine = N(7)-methylguanosine(46) in tRNA + S-adenosyl-L-homocysteine. It participates in tRNA modification; N(7)-methylguanine-tRNA biosynthesis. Catalyzes the formation of N(7)-methylguanine at position 46 (m7G46) in tRNA. The polypeptide is tRNA (guanine-N(7)-)-methyltransferase (Mycobacterium leprae (strain Br4923)).